Reading from the N-terminus, the 380-residue chain is UDP-N-acetylglucosamine--N-acetylmuramyl-(pentapeptide) pyrophosphoryl-undecaprenol N-acetylglucosamine transferase (380 aa).

UDP-N-acetyl-alpha-D-glucosamine-binding positions include 23-25 (TGG), Asn137, Arg178, Ser210, Ile266, and Gln311.

The protein belongs to the glycosyltransferase 28 family. MurG subfamily.

It localises to the cell inner membrane. It carries out the reaction di-trans,octa-cis-undecaprenyl diphospho-N-acetyl-alpha-D-muramoyl-L-alanyl-D-glutamyl-meso-2,6-diaminopimeloyl-D-alanyl-D-alanine + UDP-N-acetyl-alpha-D-glucosamine = di-trans,octa-cis-undecaprenyl diphospho-[N-acetyl-alpha-D-glucosaminyl-(1-&gt;4)]-N-acetyl-alpha-D-muramoyl-L-alanyl-D-glutamyl-meso-2,6-diaminopimeloyl-D-alanyl-D-alanine + UDP + H(+). Its pathway is cell wall biogenesis; peptidoglycan biosynthesis. In terms of biological role, cell wall formation. Catalyzes the transfer of a GlcNAc subunit on undecaprenyl-pyrophosphoryl-MurNAc-pentapeptide (lipid intermediate I) to form undecaprenyl-pyrophosphoryl-MurNAc-(pentapeptide)GlcNAc (lipid intermediate II). The protein is UDP-N-acetylglucosamine--N-acetylmuramyl-(pentapeptide) pyrophosphoryl-undecaprenol N-acetylglucosamine transferase of Bacteroides fragilis (strain ATCC 25285 / DSM 2151 / CCUG 4856 / JCM 11019 / LMG 10263 / NCTC 9343 / Onslow / VPI 2553 / EN-2).